A 196-amino-acid chain; its full sequence is Phosphate-specific transport system accessory protein PhoU homolog (196 aa).

Belongs to the PhoU family. In terms of assembly, homodimer.

It is found in the cytoplasm. In terms of biological role, plays a role in the regulation of phosphate uptake. The protein is Phosphate-specific transport system accessory protein PhoU homolog of Archaeoglobus fulgidus (strain ATCC 49558 / DSM 4304 / JCM 9628 / NBRC 100126 / VC-16).